Consider the following 292-residue polypeptide: NAD kinase (292 aa).

The active-site Proton acceptor is Asp64. Residues 64-65, 138-139, Arg149, Arg166, Asp168, 179-184, and Gln238 each bind NAD(+); these read DG, ND, and TGYAVS.

The protein belongs to the NAD kinase family. Requires a divalent metal cation as cofactor.

The protein localises to the cytoplasm. It catalyses the reaction NAD(+) + ATP = ADP + NADP(+) + H(+). In terms of biological role, involved in the regulation of the intracellular balance of NAD and NADP, and is a key enzyme in the biosynthesis of NADP. Catalyzes specifically the phosphorylation on 2'-hydroxyl of the adenosine moiety of NAD to yield NADP. The sequence is that of NAD kinase from Oleidesulfovibrio alaskensis (strain ATCC BAA-1058 / DSM 17464 / G20) (Desulfovibrio alaskensis).